The primary structure comprises 369 residues: MYFLVADHREHHVIPFLKTDFHHMHQNPIQKNQAFLEIKQLFTGDYLICKSPSTILACIERKTYKDFAASLKDGRYKNRQKMLSLREQTNCQLYFFVEGPAFPNPQKKINHVAYASIITAMTHLMVRDHMFVIQTKNEAHSSQKLVQLFYAFSKEMVCVVPTSLTPTDEELCIKLWSSLSGISGVIGKILANTCSVAHLVSGKLPSQNIDQLKTPSNRPFPKKVKRMLISISKGNKELEIKLLSGVPNIGKKLAAEILKDHALLFFLNQPVECLANIQIAQKTRTIKLGMKRAEAIHYFLNWCGSAHVTVDSQNITKASRPTMQVATQLIATQPAATQPLHDVSDDASSDASSPTGHQTLSKEMSLNTA.

In terms of domain architecture, ERCC4 spans phenylalanine 3 to alanine 101. The interval proline 339–alanine 369 is disordered. A compositionally biased stretch (polar residues) spans proline 354–alanine 369.

It belongs to the asfivirus EP364R family.

Plays a role in the inhibition of type I interferon signaling pathway. Mechanistically, specifically interacts with 2',3'-cGAMP and cleaves it via its phosphodiesterase activity. In turn, prevents 2',3'-cGAMP interaction with host ER-resident STING1 leading to inhibition of downstream signaling pathway and type I interferon production. The polypeptide is ERCC4 domain-containing protein EP364R (African swine fever virus (isolate Tick/South Africa/Pretoriuskop Pr4/1996) (ASFV)).